Here is a 315-residue protein sequence, read N- to C-terminus: Protein LST8 homolog (315 aa).

WD repeat units lie at residues 1-31, 33-71, 76-115, 119-158, 161-200, 211-250, 253-292, and 295-315; these read MGDQ…KTMR, VETS…TAPV, GVQK…PHCS, DCES…HECI, EVDA…DQKM, AHTR…KWRE, IENY…PTRE, and GHTK…KVNH.

Belongs to the WD repeat LST8 family.

It localises to the cytoplasm. This Drosophila pseudoobscura pseudoobscura (Fruit fly) protein is Protein LST8 homolog.